Here is a 345-residue protein sequence, read N- to C-terminus: Ryncolin-1 (345 aa).

The signal sequence occupies residues 1–19; that stretch reads MKPWAAFHLIFLVASSLEG. A disordered region spans residues 48–118; the sequence is ILQSQPGIPG…DKGDKGEDCN (71 aa). One can recognise a Collagen-like domain in the interval 57–114; the sequence is GIPGVPGTNGSEGLKGDPGPQGPPGIRGPDGIRGEAGPKGDKGDQGDKGDKGDKGDKG. Over residues 86 to 116 the composition is skewed to basic and acidic residues; that stretch reads DGIRGEAGPKGDKGDQGDKGDKGDKGDKGED. The Fibrinogen C-terminal domain occupies 121–339; sequence GCLPTEVRNC…YADMKIRPQQ (219 aa). Cystine bridges form between Cys130/Cys158 and Cys282/Cys295.

This sequence belongs to the ficolin lectin family. Veficolin subfamily. In terms of processing, hydroxylated, possibly at Pro-80. In terms of tissue distribution, expressed by the venom duct.

It localises to the secreted. Initiates complement activation and/or interferes in platelet aggregation and/or blood coagulation. This chain is Ryncolin-1, found in Cerberus rynchops (Dog-faced water snake).